The sequence spans 392 residues: DNA-directed RNA polymerase subunit Rpo1C (392 aa).

The protein belongs to the RNA polymerase beta' chain family. In terms of assembly, part of the RNA polymerase complex.

The protein resides in the cytoplasm. The enzyme catalyses RNA(n) + a ribonucleoside 5'-triphosphate = RNA(n+1) + diphosphate. Its function is as follows. DNA-dependent RNA polymerase (RNAP) catalyzes the transcription of DNA into RNA using the four ribonucleoside triphosphates as substrates. Forms part of the jaw domain. In Saccharolobus islandicus (strain Y.N.15.51 / Yellowstone #2) (Sulfolobus islandicus), this protein is DNA-directed RNA polymerase subunit Rpo1C.